The sequence spans 210 residues: Redox-sensing transcriptional repressor Rex (210 aa).

The segment at residues lysine 17–phenylalanine 56 is a DNA-binding region (H-T-H motif). Position 91–96 (glycine 91–glycine 96) interacts with NAD(+).

This sequence belongs to the transcriptional regulatory Rex family. In terms of assembly, homodimer.

The protein resides in the cytoplasm. In terms of biological role, modulates transcription in response to changes in cellular NADH/NAD(+) redox state. The sequence is that of Redox-sensing transcriptional repressor Rex from Clostridium botulinum (strain ATCC 19397 / Type A).